Consider the following 185-residue polypeptide: Segregation and condensation protein B (185 aa).

This sequence belongs to the ScpB family. Homodimer. Homodimerization may be required to stabilize the binding of ScpA to the Smc head domains. Component of a cohesin-like complex composed of ScpA, ScpB and the Smc homodimer, in which ScpA and ScpB bind to the head domain of Smc. The presence of the three proteins is required for the association of the complex with DNA.

Its subcellular location is the cytoplasm. Functionally, participates in chromosomal partition during cell division. May act via the formation of a condensin-like complex containing Smc and ScpA that pull DNA away from mid-cell into both cell halves. The chain is Segregation and condensation protein B from Carboxydothermus hydrogenoformans (strain ATCC BAA-161 / DSM 6008 / Z-2901).